The primary structure comprises 119 residues: Large ribosomal subunit protein bL17 (119 aa).

It belongs to the bacterial ribosomal protein bL17 family. As to quaternary structure, part of the 50S ribosomal subunit. Contacts protein L32.

This chain is Large ribosomal subunit protein bL17, found in Psychrobacter arcticus (strain DSM 17307 / VKM B-2377 / 273-4).